A 153-amino-acid polypeptide reads, in one-letter code: MAGRQHGSGRLWALGGAALGACLAGVATQLVEPSTAPPKPKPPPLTKETVVFWDMRLWHVVGIFSLFVLSIIITLCCVFNCRVPRTRKEIEARYLQRKAAKMYTDKLETVPPLNELTEIPGEDKKKKKKDSVDTVAIKVEEDEKNEAKKKGEK.

Residues 1–28 form the signal peptide; that stretch reads MAGRQHGSGRLWALGGAALGACLAGVAT. Residues 29–58 lie on the Extracellular side of the membrane; the sequence is QLVEPSTAPPKPKPPPLTKETVVFWDMRLW. A helical membrane pass occupies residues 59-79; that stretch reads HVVGIFSLFVLSIIITLCCVF. Topologically, residues 80-153 are cytoplasmic; it reads NCRVPRTRKE…KNEAKKKGEK (74 aa).

As to quaternary structure, forms the MET channel composed of TMC (TMC1 or TMC2), TMIE, TOMT, CIB (CIB2 or CIB3), LHPL5 and PCDH15. In terms of tissue distribution, expressed in brain, kidney, liver, lung and cochlea.

It localises to the membrane. In terms of biological role, auxiliary subunit of the mechanotransducer (MET) non-specific cation channel complex located at the tips of stereocilia of cochlear hair cells and that mediates sensory transduction in the auditory system. The MET complex is composed of two dimeric pore-forming ion-conducting transmembrane TMC (TMC1 or TMC2) subunits, and aided by several auxiliary proteins including LHFPL5, TMIE, CIB2/3 and TOMT, and the tip-link PCDH15. May contribute to the formation of the pore. In Mus musculus (Mouse), this protein is Transmembrane inner ear expressed protein (Tmie).